A 339-amino-acid polypeptide reads, in one-letter code: Probable G-protein coupled receptor 33 (339 aa).

Residues 1 to 30 (MDLINSSTHVINVSTSLTNSTGVPTPAPKT) lie on the Extracellular side of the membrane. Asn5, Asn12, and Asn19 each carry an N-linked (GlcNAc...) asparagine glycan. A helical membrane pass occupies residues 31–53 (IIAASLFMAFIIGVISNGLYLWM). At 54–64 (LQFKMQRTVNT) the chain is on the cytoplasmic side. Residues 65–86 (LLFFHLILSYFISTLILPFMAT) form a helical membrane-spanning segment. At 87–103 (SFLQDNHWVFGSVLCKA) the chain is on the extracellular side. Cys101 and Cys179 are oxidised to a cystine. Residues 104 to 124 (FNSTLSVSMFASVFFLSAISV) traverse the membrane as a helical segment. The Cytoplasmic portion of the chain corresponds to 125-143 (ARYYLILHPVWSQQHRTPH). A helical transmembrane segment spans residues 144-165 (WASRIALQIWISATILSIPYLV). The Extracellular portion of the chain corresponds to 166 to 209 (FRTTHDDHKGRIKCQNNYIVSTDWESKEHQTLGQWIHAACFVGR). The helical transmembrane segment at 210-230 (FLLGFLLPFLVIIFCYKRVAT) threads the bilayer. The Cytoplasmic segment spans residues 231-246 (KMKEKGLFKSSKPFKV). A helical membrane pass occupies residues 247–268 (MVTAVISFFVCWMPYHVHSGLV). Residues 269–283 (LTKSQPLPLHLTLGL) lie on the Extracellular side of the membrane. A helical transmembrane segment spans residues 284-303 (AVVTISFNTVVSPVLYLFTG). At 304 to 339 (ENFKVFKKSILALFNSTFSDISSTERTQTLNSETEI) the chain is on the cytoplasmic side.

The protein belongs to the G-protein coupled receptor 1 family. In terms of tissue distribution, expressed predominantly in lung, spleen and testis.

The protein resides in the cell membrane. Functionally, orphan receptor; could be a chemoattractant receptor. The chain is Probable G-protein coupled receptor 33 (Gpr33) from Mus musculus (Mouse).